The chain runs to 179 residues: Large ribosomal subunit protein uL5 (179 aa).

The protein belongs to the universal ribosomal protein uL5 family. In terms of assembly, part of the 50S ribosomal subunit; part of the 5S rRNA/L5/L18/L25 subcomplex. Contacts the 5S rRNA and the P site tRNA. Forms a bridge to the 30S subunit in the 70S ribosome.

In terms of biological role, this is one of the proteins that bind and probably mediate the attachment of the 5S RNA into the large ribosomal subunit, where it forms part of the central protuberance. In the 70S ribosome it contacts protein S13 of the 30S subunit (bridge B1b), connecting the 2 subunits; this bridge is implicated in subunit movement. Contacts the P site tRNA; the 5S rRNA and some of its associated proteins might help stabilize positioning of ribosome-bound tRNAs. This chain is Large ribosomal subunit protein uL5, found in Shewanella oneidensis (strain ATCC 700550 / JCM 31522 / CIP 106686 / LMG 19005 / NCIMB 14063 / MR-1).